The following is a 269-amino-acid chain: BAG family molecular chaperone regulator 4 (269 aa).

Positions M1–A40 are disordered. Basic and acidic residues predominate over residues Q21–Q35. In terms of domain architecture, Ubiquitin-like spans Q46–K122. One can recognise a BAG domain in the interval A138–K219. Residues S241 to D269 are disordered.

As to quaternary structure, binds to the ATPase domain of HSP70/HSC70 chaperones. Interacts with HSP70-1. In terms of tissue distribution, detected in stems, leaves, flowers and roots.

In terms of biological role, co-chaperone that regulates diverse cellular pathways, such as programmed cell death and stress responses. This is BAG family molecular chaperone regulator 4 (BAG4) from Arabidopsis thaliana (Mouse-ear cress).